A 340-amino-acid chain; its full sequence is DNA-directed RNA polymerase subunit alpha (340 aa).

The segment at 1 to 235 is alpha N-terminal domain (alpha-NTD); it reads MYRNWTELIK…DQLNPFINFD (235 aa). Residues 251–340 are alpha C-terminal domain (alpha-CTD); the sequence is WNPNLFRKVD…LSKQFEEENF (90 aa).

This sequence belongs to the RNA polymerase alpha chain family. As to quaternary structure, homodimer. The RNAP catalytic core consists of 2 alpha, 1 beta, 1 beta' and 1 omega subunit. When a sigma factor is associated with the core the holoenzyme is formed, which can initiate transcription.

The enzyme catalyses RNA(n) + a ribonucleoside 5'-triphosphate = RNA(n+1) + diphosphate. In terms of biological role, DNA-dependent RNA polymerase catalyzes the transcription of DNA into RNA using the four ribonucleoside triphosphates as substrates. This is DNA-directed RNA polymerase subunit alpha from Magnetococcus marinus (strain ATCC BAA-1437 / JCM 17883 / MC-1).